Here is a 391-residue protein sequence, read N- to C-terminus: Polyketide synthase 3 (391 aa).

The active site involves cysteine 164.

This sequence belongs to the thiolase-like superfamily. Chalcone/stilbene synthases family. As to quaternary structure, homodimer.

It carries out the reaction (E)-4-coumaroyl-CoA + 3 malonyl-CoA + 3 H(+) = 2',4,4',6'-tetrahydroxychalcone + 3 CO2 + 4 CoA. It functions in the pathway secondary metabolite biosynthesis; flavonoid biosynthesis. Its function is as follows. Polyketide synthase producing p-coumaryltriacetic acid lactone (CTAL) and slightly naringenin chalcone. Can use p-coumaryl-CoA as substrate. This is Polyketide synthase 3 (PKS3) from Rubus idaeus (Raspberry).